The following is a 239-amino-acid chain: Probable transcriptional regulatory protein ACL_0044 (239 aa).

It belongs to the TACO1 family.

It is found in the cytoplasm. This chain is Probable transcriptional regulatory protein ACL_0044, found in Acholeplasma laidlawii (strain PG-8A).